The sequence spans 141 residues: Hemoglobin subunit alpha-A/Q/R/T (141 aa).

The Globin domain maps to 1-141; sequence VLSPADKTNV…VSTVLTSKYR (141 aa). Serine 3 is subject to Phosphoserine. Position 7 is an N6-succinyllysine (lysine 7). Position 8 is a phosphothreonine (threonine 8). Residue lysine 11 is modified to N6-succinyllysine. Position 16 is an N6-acetyllysine; alternate (lysine 16). Position 16 is an N6-succinyllysine; alternate (lysine 16). Tyrosine 24 bears the Phosphotyrosine mark. Residue serine 35 is modified to Phosphoserine. Lysine 40 carries the post-translational modification N6-succinyllysine. Serine 49 is modified (phosphoserine). Residue histidine 58 coordinates O2. Histidine 87 is a heme b binding site. Residue serine 102 is modified to Phosphoserine. Position 108 is a phosphothreonine (threonine 108). 2 positions are modified to phosphoserine: serine 124 and serine 131. Phosphothreonine is present on residues threonine 134 and threonine 137. Serine 138 is subject to Phosphoserine.

Belongs to the globin family. As to quaternary structure, heterotetramer of two alpha chains and two beta chains. Red blood cells.

Involved in oxygen transport from the lung to the various peripheral tissues. In Macaca fascicularis (Crab-eating macaque), this protein is Hemoglobin subunit alpha-A/Q/R/T.